Consider the following 307-residue polypeptide: Cytidine deaminase 7 (307 aa).

CMP/dCMP-type deaminase domains are found at residues 22 to 155 and 185 to 307; these read TEPI…FTPD and SDCS…FITE. Residue 63 to 65 coordinates substrate; sequence NVE. Position 76 (His76) interacts with Zn(2+). Residue Glu78 is the Proton donor of the active site. Residues Cys111 and Cys114 each coordinate Zn(2+).

Belongs to the cytidine and deoxycytidylate deaminase family. As to quaternary structure, homodimer. Zn(2+) serves as cofactor.

The enzyme catalyses cytidine + H2O + H(+) = uridine + NH4(+). It carries out the reaction 2'-deoxycytidine + H2O + H(+) = 2'-deoxyuridine + NH4(+). Functionally, this enzyme scavenges exogenous and endogenous cytidine and 2'-deoxycytidine for UMP synthesis. In Arabidopsis thaliana (Mouse-ear cress), this protein is Cytidine deaminase 7 (CDA7).